Consider the following 106-residue polypeptide: Small ribosomal subunit protein uS10 (106 aa).

It belongs to the universal ribosomal protein uS10 family. In terms of assembly, part of the 30S ribosomal subunit.

Functionally, involved in the binding of tRNA to the ribosomes. The polypeptide is Small ribosomal subunit protein uS10 (Pyrobaculum arsenaticum (strain DSM 13514 / JCM 11321 / PZ6)).